Reading from the N-terminus, the 755-residue chain is MKNLISIILLILIFFNYSKFVKSKNCKIAVLLSGDFSDLGYNYQFNEARVKAESILKLSDFSLYYKNLDESEELSEASFKDAIAQGANLIVVASSGQTEMGLKYAKLYKDSDIYWIIKTSARPVDYLPKVAVLDFNTDRAHFTLGYFAGKMSKTGVVGFVSPGAYIASNGNAFYLGAKEARSNITFVTTFTGSWFNPEVAYKAAEMLISNGADFLGMSQDDMSVQKAVIDSGSLGLGVTGYPTRLIYGSANIGLSYITDWTDVFVKYASHVINDTWPDSDYYKTSLNPGGSLLFDEYSYLVPQSIRDLVNNEIEILKNDDFNPFRCNPMYIDLGYKLDVNGCISYNEFEKNQQVLKGDKYSKTISFGTYTIPIEFVDYSSSMKLGITITSSICIFLCIISIIIVLVFRTARIIKSASPAFLFLILMGCILIFIGCIIFSQSPNEGTCRARVWLLSIGYTIFLGSLLVKNWRIWLLFDNPKLKKRSITNWKLYPWVAGILAADVLILAFWQGLGNIRSESRIGIDSLTKYQYTNVCSSNDQGSIALYILLVFHGIKLLVACFISFKIKVVDIDEFNESKPIASSVYIITFCLFIVIPLMVSPQSVTSQVTTICVCAIVTTLISIILLFGSKFYKMITQGAALNQTFASSSKSSSFSQSLEKKKTGEEDDSESSEENGKKAIVVTQQSVLAHFSSDTEDDENETQQIDEEKDEQIAGSNEDIIQPEENIEENNVSVIQSKRLSNQLNGEVEIDSNNL.

The N-terminal stretch at 1-23 (MKNLISIILLILIFFNYSKFVKS) is a signal peptide. N-linked (GlcNAc...) asparagine glycans are attached at residues N16, N183, and N273. Residues 24 to 385 (KNCKIAVLLS…VDYSSSMKLG (362 aa)) are Extracellular-facing. A helical membrane pass occupies residues 386–406 (ITITSSICIFLCIISIIIVLV). Over 407 to 417 (FRTARIIKSAS) the chain is Cytoplasmic. The helical transmembrane segment at 418–438 (PAFLFLILMGCILIFIGCIIF) threads the bilayer. The Extracellular segment spans residues 439-455 (SQSPNEGTCRARVWLLS). A helical transmembrane segment spans residues 456 to 476 (IGYTIFLGSLLVKNWRIWLLF). Over 477–492 (DNPKLKKRSITNWKLY) the chain is Cytoplasmic. Residues 493-513 (PWVAGILAADVLILAFWQGLG) traverse the membrane as a helical segment. Over 514–541 (NIRSESRIGIDSLTKYQYTNVCSSNDQG) the chain is Extracellular. Residues 542-562 (SIALYILLVFHGIKLLVACFI) traverse the membrane as a helical segment. Topologically, residues 563–578 (SFKIKVVDIDEFNESK) are cytoplasmic. The helical transmembrane segment at 579 to 599 (PIASSVYIITFCLFIVIPLMV) threads the bilayer. The Extracellular portion of the chain corresponds to 600–607 (SPQSVTSQ). A helical membrane pass occupies residues 608–628 (VTTICVCAIVTTLISIILLFG). The Cytoplasmic segment spans residues 629-755 (SKFYKMITQG…GEVEIDSNNL (127 aa)). 2 disordered regions span residues 656-676 (QSLE…EENG) and 691-729 (FSSD…NIEE). The segment covering 694 to 710 (DTEDDENETQQIDEEKD) has biased composition (acidic residues).

It in the N-terminal section; belongs to the BMP lipoprotein family. This sequence in the C-terminal section; belongs to the G-protein coupled receptor 3 family. GABA-B receptor subfamily.

It localises to the membrane. In Dictyostelium discoideum (Social amoeba), this protein is Metabotropic glutamate receptor-like protein B (grlB).